The following is a 213-amino-acid chain: 3-isopropylmalate dehydratase small subunit (213 aa).

This sequence belongs to the LeuD family. LeuD type 1 subfamily. Heterodimer of LeuC and LeuD.

It catalyses the reaction (2R,3S)-3-isopropylmalate = (2S)-2-isopropylmalate. The protein operates within amino-acid biosynthesis; L-leucine biosynthesis; L-leucine from 3-methyl-2-oxobutanoate: step 2/4. Catalyzes the isomerization between 2-isopropylmalate and 3-isopropylmalate, via the formation of 2-isopropylmaleate. The polypeptide is 3-isopropylmalate dehydratase small subunit (Neisseria gonorrhoeae (strain ATCC 700825 / FA 1090)).